We begin with the raw amino-acid sequence, 919 residues long: Leucine--tRNA ligase (919 aa).

Positions 83-93 (PYPSGKLHMGH) match the 'HIGH' region motif. The 'KMSKS' region signature appears at 670 to 674 (KMSKS). Lys-673 contributes to the ATP binding site.

The protein belongs to the class-I aminoacyl-tRNA synthetase family.

The protein resides in the cytoplasm. It carries out the reaction tRNA(Leu) + L-leucine + ATP = L-leucyl-tRNA(Leu) + AMP + diphosphate. The protein is Leucine--tRNA ligase of Psychrobacter cryohalolentis (strain ATCC BAA-1226 / DSM 17306 / VKM B-2378 / K5).